The following is a 25-amino-acid chain: uncharacterized protein (25 aa).

This is an uncharacterized protein from Ornithodoros (relapsing fever ticks).